The chain runs to 459 residues: Bifunctional protein GlmU (459 aa).

The interval 1–230 is pyrophosphorylase; it reads MSNRFAVILA…FDETLGVNDR (230 aa). Residues 9–12, lysine 23, glutamine 73, and 78–79 each bind UDP-N-acetyl-alpha-D-glucosamine; these read LAAG and GT. Aspartate 103 lines the Mg(2+) pocket. UDP-N-acetyl-alpha-D-glucosamine-binding residues include glycine 140, glutamate 155, asparagine 170, and asparagine 228. Residue asparagine 228 participates in Mg(2+) binding. The tract at residues 231-251 is linker; that stretch reads VALSQAEIIMKNRINRKNMVN. Residues 252 to 459 form an N-acetyltransferase region; sequence GVTIIDPSNT…VDQLLNKKKS (208 aa). UDP-N-acetyl-alpha-D-glucosamine is bound by residues arginine 333 and lysine 351. Histidine 363 acts as the Proton acceptor in catalysis. Positions 366 and 377 each coordinate UDP-N-acetyl-alpha-D-glucosamine. Residues 386–387, alanine 423, and arginine 440 contribute to the acetyl-CoA site; that span reads NY.

It in the N-terminal section; belongs to the N-acetylglucosamine-1-phosphate uridyltransferase family. In the C-terminal section; belongs to the transferase hexapeptide repeat family. As to quaternary structure, homotrimer. Mg(2+) is required as a cofactor.

Its subcellular location is the cytoplasm. It catalyses the reaction alpha-D-glucosamine 1-phosphate + acetyl-CoA = N-acetyl-alpha-D-glucosamine 1-phosphate + CoA + H(+). It carries out the reaction N-acetyl-alpha-D-glucosamine 1-phosphate + UTP + H(+) = UDP-N-acetyl-alpha-D-glucosamine + diphosphate. The protein operates within nucleotide-sugar biosynthesis; UDP-N-acetyl-alpha-D-glucosamine biosynthesis; N-acetyl-alpha-D-glucosamine 1-phosphate from alpha-D-glucosamine 6-phosphate (route II): step 2/2. It participates in nucleotide-sugar biosynthesis; UDP-N-acetyl-alpha-D-glucosamine biosynthesis; UDP-N-acetyl-alpha-D-glucosamine from N-acetyl-alpha-D-glucosamine 1-phosphate: step 1/1. Its pathway is bacterial outer membrane biogenesis; LPS lipid A biosynthesis. Catalyzes the last two sequential reactions in the de novo biosynthetic pathway for UDP-N-acetylglucosamine (UDP-GlcNAc). The C-terminal domain catalyzes the transfer of acetyl group from acetyl coenzyme A to glucosamine-1-phosphate (GlcN-1-P) to produce N-acetylglucosamine-1-phosphate (GlcNAc-1-P), which is converted into UDP-GlcNAc by the transfer of uridine 5-monophosphate (from uridine 5-triphosphate), a reaction catalyzed by the N-terminal domain. This is Bifunctional protein GlmU from Bacillus mycoides (strain KBAB4) (Bacillus weihenstephanensis).